Consider the following 179-residue polypeptide: Acireductone dioxygenase (179 aa).

Residues histidine 100, histidine 102, glutamate 106, and histidine 145 each contribute to the Fe(2+) site. Ni(2+) is bound by residues histidine 100, histidine 102, glutamate 106, and histidine 145.

The protein belongs to the acireductone dioxygenase (ARD) family. In terms of assembly, monomer. The cofactor is Fe(2+). Ni(2+) is required as a cofactor.

The catalysed reaction is 1,2-dihydroxy-5-(methylsulfanyl)pent-1-en-3-one + O2 = 3-(methylsulfanyl)propanoate + CO + formate + 2 H(+). The enzyme catalyses 1,2-dihydroxy-5-(methylsulfanyl)pent-1-en-3-one + O2 = 4-methylsulfanyl-2-oxobutanoate + formate + 2 H(+). It participates in amino-acid biosynthesis; L-methionine biosynthesis via salvage pathway; L-methionine from S-methyl-5-thio-alpha-D-ribose 1-phosphate: step 5/6. Its function is as follows. Catalyzes 2 different reactions between oxygen and the acireductone 1,2-dihydroxy-3-keto-5-methylthiopentene (DHK-MTPene) depending upon the metal bound in the active site. Fe-containing acireductone dioxygenase (Fe-ARD) produces formate and 2-keto-4-methylthiobutyrate (KMTB), the alpha-ketoacid precursor of methionine in the methionine recycle pathway. Ni-containing acireductone dioxygenase (Ni-ARD) produces methylthiopropionate, carbon monoxide and formate, and does not lie on the methionine recycle pathway. In Bacillus licheniformis (strain ATCC 14580 / DSM 13 / JCM 2505 / CCUG 7422 / NBRC 12200 / NCIMB 9375 / NCTC 10341 / NRRL NRS-1264 / Gibson 46), this protein is Acireductone dioxygenase.